The sequence spans 182 residues: Transcription termination/antitermination protein NusG (182 aa).

Belongs to the NusG family.

Its function is as follows. Participates in transcription elongation, termination and antitermination. The sequence is that of Transcription termination/antitermination protein NusG from Chlamydia pneumoniae (Chlamydophila pneumoniae).